We begin with the raw amino-acid sequence, 173 residues long: Photosystem I reaction center subunit XI (173 aa).

2 consecutive transmembrane segments (helical) span residues 92-112 and 148-168; these read LAGLLAAIGLVVLLTGALSLY and LIGGIGGAVVAYFLTSNLGII.

It belongs to the PsaL family.

It localises to the cellular thylakoid membrane. In Nostoc punctiforme (strain ATCC 29133 / PCC 73102), this protein is Photosystem I reaction center subunit XI.